Here is an 812-residue protein sequence, read N- to C-terminus: E3 UFM1-protein ligase 1 homolog (812 aa).

The disordered stretch occupies residues 389-495; that stretch reads IKHSAGQGKP…KTKEDNTNIF (107 aa). Composition is skewed to basic and acidic residues over residues 403–415 and 475–491; these read SEHRIGSDGKDLG and DAKHGGKKASEKTKEDN.

It belongs to the UFL1 family.

Its function is as follows. E3 UFM1-protein ligase that mediates ufmylation of target proteins. The chain is E3 UFM1-protein ligase 1 homolog from Oryza sativa subsp. indica (Rice).